The chain runs to 887 residues: Alanine--tRNA ligase (887 aa).

Residues His579, His583, Cys681, and His685 each coordinate Zn(2+).

Belongs to the class-II aminoacyl-tRNA synthetase family. Zn(2+) is required as a cofactor.

It is found in the cytoplasm. It catalyses the reaction tRNA(Ala) + L-alanine + ATP = L-alanyl-tRNA(Ala) + AMP + diphosphate. Its function is as follows. Catalyzes the attachment of alanine to tRNA(Ala) in a two-step reaction: alanine is first activated by ATP to form Ala-AMP and then transferred to the acceptor end of tRNA(Ala). Also edits incorrectly charged Ser-tRNA(Ala) and Gly-tRNA(Ala) via its editing domain. In Flavobacterium psychrophilum (strain ATCC 49511 / DSM 21280 / CIP 103535 / JIP02/86), this protein is Alanine--tRNA ligase.